Here is an 80-residue protein sequence, read N- to C-terminus: WAP four-disulfide core domain protein 15A (80 aa).

The N-terminal stretch at 1–20 is a signal peptide; that stretch reads MKPSSLLLFTTTILLCLSMA. A WAP domain is found at 29–76; sequence VTPKQGYCPEFLLDCPFVLLPVCSRDKGCKGTKKCCFYYCQMRCVEPW. Intrachain disulfides connect Cys-36–Cys-64, Cys-43–Cys-68, Cys-51–Cys-63, and Cys-57–Cys-72.

It is found in the secreted. In terms of biological role, antibacterial protein. The polypeptide is WAP four-disulfide core domain protein 15A (Mus musculus (Mouse)).